We begin with the raw amino-acid sequence, 1095 residues long: Actin cross-linking toxin VgrG1 (1095 aa).

Residues 712-1095 (TPDFPTHFPK…TVIQQVESLV (384 aa)) enclose the ACD domain. Position 723-727 (723-727 (SIGIE)) interacts with ATP. Mg(2+) contacts are provided by Glu-727 and Glu-789. Ser-792 contributes to the ATP binding site. Gln-873 lines the Mg(2+) pocket. Arg-979 contacts ATP. Position 1050 (Glu-1050) interacts with Mg(2+).

It belongs to the VgrG protein family. Interacts with protein VC1417. Mg(2+) is required as a cofactor.

The protein resides in the secreted. Its subcellular location is the host cytoplasm. It is found in the host cytosol. Its function is as follows. Part of the type VI secretion system (T6SS) specialized secretion system, which delivers several virulence factors in both prokaryotic and eukaryotic cells during infection. Forms the spike at the tip of the elongating tube probably formed by hemolysin co-regulated protein/Hcp. Allows the delivery of the TseL antibacterial toxin to target cells where it exerts its toxicity. Also acts directly as an actin-directed toxin that catalyzes the covalent cross-linking of host cytoplasmic monomeric actin. Mediates the cross-link between 'Lys-50' of one monomer and 'Glu-270' of another actin monomer, resulting in formation of highly toxic actin oligomers that cause cell rounding. The toxin can be highly efficient at very low concentrations by acting on formin homology family proteins: toxic actin oligomers bind with high affinity to formins and adversely affect both nucleation and elongation abilities of formins, causing their potent inhibition in both profilin-dependent and independent manners. Acts as an acid--amino-acid ligase that transfers the gamma-phosphoryl group of ATP to the 'Glu-270' actin residue, resulting in the formation of an activated acyl phosphate intermediate. This intermediate is further hydrolyzed and the energy of hydrolysis is utilized for the formation of the amide bond between actin subunits. The sequence is that of Actin cross-linking toxin VgrG1 from Vibrio cholerae serotype O1 (strain ATCC 39541 / Classical Ogawa 395 / O395).